The sequence spans 132 residues: NADH-quinone oxidoreductase subunit I 1 (132 aa).

4Fe-4S ferredoxin-type domains are found at residues 42–71 (LKVS…VEAG) and 81–110 (ERYE…MTGQ). Positions 51, 54, 57, 61, 90, 93, 96, and 100 each coordinate [4Fe-4S] cluster.

It belongs to the complex I 23 kDa subunit family. As to quaternary structure, NDH-1 is composed of 14 different subunits. Subunits NuoA, H, J, K, L, M, N constitute the membrane sector of the complex. The cofactor is [4Fe-4S] cluster.

It localises to the cell inner membrane. The enzyme catalyses a quinone + NADH + 5 H(+)(in) = a quinol + NAD(+) + 4 H(+)(out). In terms of biological role, NDH-1 shuttles electrons from NADH, via FMN and iron-sulfur (Fe-S) centers, to quinones in the respiratory chain. The immediate electron acceptor for the enzyme in this species is believed to be ubiquinone. Couples the redox reaction to proton translocation (for every two electrons transferred, four hydrogen ions are translocated across the cytoplasmic membrane), and thus conserves the redox energy in a proton gradient. This chain is NADH-quinone oxidoreductase subunit I 1, found in Geobacter sulfurreducens (strain ATCC 51573 / DSM 12127 / PCA).